Reading from the N-terminus, the 369-residue chain is Anhydro-N-acetylmuramic acid kinase (369 aa).

G12 to D19 contacts ATP.

It belongs to the anhydro-N-acetylmuramic acid kinase family.

The catalysed reaction is 1,6-anhydro-N-acetyl-beta-muramate + ATP + H2O = N-acetyl-D-muramate 6-phosphate + ADP + H(+). It functions in the pathway amino-sugar metabolism; 1,6-anhydro-N-acetylmuramate degradation. The protein operates within cell wall biogenesis; peptidoglycan recycling. Catalyzes the specific phosphorylation of 1,6-anhydro-N-acetylmuramic acid (anhMurNAc) with the simultaneous cleavage of the 1,6-anhydro ring, generating MurNAc-6-P. Is required for the utilization of anhMurNAc either imported from the medium or derived from its own cell wall murein, and thus plays a role in cell wall recycling. This Escherichia coli (strain SMS-3-5 / SECEC) protein is Anhydro-N-acetylmuramic acid kinase.